The sequence spans 321 residues: MDYNNNRYGGGGGGSKFNLGHIVGDPFSLATIAIATAGWLIAFVSSIIANIDQEYPNYSWWALAYMFFVILGVTFAVAANAVYTYHVAMVGFLAAGLVFTTSSVNSLIYWSDKAKQAAAAGFILLSMVSIVWIFYFGSQPTASHRQTIDSFALHKDHAPSRASRHMTQSYRPETTHSAQHPQMYNSSQLAGFETSSPVTGYPGGAAGATKRESASAFPPPGQGGNFSNNQQPNPITSQNNPQNQHQQPQDLTSPSTTQQPTEYPYRAKAIYSYEANPDDANEISFNKHEILEVSDVSGRWWQAKKENGETGIAPSNYLILL.

Residues 1–28 (MDYNNNRYGGGGGGSKFNLGHIVGDPFS) lie on the Cytoplasmic side of the membrane. Residues 29-49 (LATIAIATAGWLIAFVSSIIA) traverse the membrane as a helical segment. Residues 50-58 (NIDQEYPNY) lie on the Extracellular side of the membrane. Asn57 carries N-linked (GlcNAc...) asparagine glycosylation. Residues 59 to 79 (SWWALAYMFFVILGVTFAVAA) form a helical membrane-spanning segment. Asn80 is a topological domain (cytoplasmic). The chain crosses the membrane as a helical span at residues 81–101 (AVYTYHVAMVGFLAAGLVFTT). Topologically, residues 102–116 (SSVNSLIYWSDKAKQ) are extracellular. The chain crosses the membrane as a helical span at residues 117–137 (AAAAGFILLSMVSIVWIFYFG). The Cytoplasmic portion of the chain corresponds to 138–321 (SQPTASHRQT…IAPSNYLILL (184 aa)). Disordered regions lie at residues 155–181 (KDHAPSRASRHMTQSYRPETTHSAQHP) and 194–261 (TSSP…QQPT). 2 stretches are compositionally biased toward polar residues: residues 165-181 (HMTQSYRPETTHSAQHP) and 225-237 (NFSNNQQPNPITS). A compositionally biased stretch (low complexity) spans 238-249 (QNNPQNQHQQPQ). A compositionally biased stretch (polar residues) spans 250–261 (DLTSPSTTQQPT). The region spanning 262 to 321 (EYPYRAKAIYSYEANPDDANEISFNKHEILEVSDVSGRWWQAKKENGETGIAPSNYLILL) is the SH3 domain.

The protein belongs to the SHO1 family. In terms of assembly, forms homooligomers.

It localises to the cell membrane. Functionally, plasma membrane osmosensor that activates the high osmolarity glycerol (HOG) MAPK signaling pathway in response to high osmolarity. The chain is High osmolarity signaling protein SHO1A (SHO1A) from Hortaea werneckii.